We begin with the raw amino-acid sequence, 185 residues long: Ribosome-recycling factor (185 aa).

Belongs to the RRF family.

It localises to the cytoplasm. In terms of biological role, responsible for the release of ribosomes from messenger RNA at the termination of protein biosynthesis. May increase the efficiency of translation by recycling ribosomes from one round of translation to another. This Chloroflexus aggregans (strain MD-66 / DSM 9485) protein is Ribosome-recycling factor.